The following is a 656-amino-acid chain: Ribosome quality control complex subunit 1 (656 aa).

Basic residues predominate over residues 1 to 11; that stretch reads MSSRALRKLQR. Disordered regions lie at residues 1-35, 51-122, and 634-656; these read MSSR…FSST, NNAI…LESS, and LFTS…GQGD. Acidic residues predominate over residues 17–32; that stretch reads LLEEALDSESDEDDEF. The span at 51–63 shows a compositional bias: basic and acidic residues; sequence NNAINSEAEKSVS. A phosphoserine mark is found at Ser56, Ser61, and Ser63. Residues 83–101 show a composition bias toward basic residues; the sequence is KKAKNKKKKKKQQKKKKVT. Over residues 102–122 the composition is skewed to basic and acidic residues; sequence GKRDLDNQSSDNEKLEGLESS. Phosphoserine is present on residues Ser110 and Ser111.

Belongs to the TCF25 family. In terms of assembly, component of the ribosome quality control complex (RQC), composed of the E3 ubiquitin ligase rkr1/ltn1, rqc1 and mtr1/rqc2, as well as cdc48 and its ubiquitin-binding cofactors. RQC forms a stable complex with 60S ribosomal subunits.

It is found in the cytoplasm. Functionally, component of the ribosome quality control complex (RQC), a ribosome-associated complex that mediates ubiquitination and extraction of incompletely synthesized nascent chains for proteasomal degradation. Within the RQC complex, rqc1 is essential for the recruitment of cdc48 to incompletely synthesized nascent polypeptides that are ubiquitinated by rkr1/ltn1. The chain is Ribosome quality control complex subunit 1 from Schizosaccharomyces pombe (strain 972 / ATCC 24843) (Fission yeast).